The primary structure comprises 258 residues: Isoprenyl transferase (258 aa).

Aspartate 38 is a catalytic residue. Aspartate 38 contacts Mg(2+). Substrate is bound by residues 39–42, tryptophan 43, arginine 51, histidine 55, and 83–85; these read GNGR and STE. The active-site Proton acceptor is asparagine 86. Substrate is bound by residues tryptophan 87, arginine 89, arginine 206, and 212 to 214; that span reads RIS. Residue glutamate 225 coordinates Mg(2+).

The protein belongs to the UPP synthase family. As to quaternary structure, homodimer. The cofactor is Mg(2+).

Catalyzes the condensation of isopentenyl diphosphate (IPP) with allylic pyrophosphates generating different type of terpenoids. This Bacillus thuringiensis subsp. konkukian (strain 97-27) protein is Isoprenyl transferase.